Reading from the N-terminus, the 351-residue chain is Nicotinate-nucleotide--dimethylbenzimidazole phosphoribosyltransferase (351 aa).

The active-site Proton acceptor is glutamate 317.

This sequence belongs to the CobT family.

The catalysed reaction is 5,6-dimethylbenzimidazole + nicotinate beta-D-ribonucleotide = alpha-ribazole 5'-phosphate + nicotinate + H(+). It functions in the pathway nucleoside biosynthesis; alpha-ribazole biosynthesis; alpha-ribazole from 5,6-dimethylbenzimidazole: step 1/2. Functionally, catalyzes the synthesis of alpha-ribazole-5'-phosphate from nicotinate mononucleotide (NAMN) and 5,6-dimethylbenzimidazole (DMB). The polypeptide is Nicotinate-nucleotide--dimethylbenzimidazole phosphoribosyltransferase (Pseudomonas aeruginosa (strain UCBPP-PA14)).